Consider the following 127-residue polypeptide: ATP synthase epsilon chain (127 aa).

This sequence belongs to the ATPase epsilon chain family. As to quaternary structure, F-type ATPases have 2 components, CF(1) - the catalytic core - and CF(0) - the membrane proton channel. CF(1) has five subunits: alpha(3), beta(3), gamma(1), delta(1), epsilon(1). CF(0) has three main subunits: a, b and c.

It localises to the cell inner membrane. Its function is as follows. Produces ATP from ADP in the presence of a proton gradient across the membrane. This Leptospira borgpetersenii serovar Hardjo-bovis (strain JB197) protein is ATP synthase epsilon chain.